Here is a 511-residue protein sequence, read N- to C-terminus: U3 snoRNP-associated protein-like YAOH (511 aa).

Positions methionine 1–serine 18 are enriched in basic residues. Residues methionine 1 to glycine 117 form a disordered region. Composition is skewed to acidic residues over residues glutamate 44 to leucine 53 and aspartate 66 to threonine 80. Positions alanine 81–glutamate 105 are enriched in basic and acidic residues. 7 WD repeats span residues lysine 158–tyrosine 197, lysine 217–alanine 256, glycine 259–cysteine 298, glycine 301–phenylalanine 339, proline 342–isoleucine 380, serine 412–arginine 451, and arginine 457–valine 497.

This sequence belongs to the WD repeat RRP9 family.

Its subcellular location is the nucleus. It is found in the nucleolus. Functionally, component of a nucleolar small nuclear ribonucleoprotein particle (snoRNP) thought to participate in the processing and modification of pre-ribosomal RNA. Essential for embryogenesis. The polypeptide is U3 snoRNP-associated protein-like YAOH (Oryza sativa subsp. japonica (Rice)).